Here is a 234-residue protein sequence, read N- to C-terminus: DNA repair protein RecO (234 aa).

The protein belongs to the RecO family.

Functionally, involved in DNA repair and RecF pathway recombination. In Idiomarina loihiensis (strain ATCC BAA-735 / DSM 15497 / L2-TR), this protein is DNA repair protein RecO.